The sequence spans 21 residues: Large ribosomal subunit protein uL10 (21 aa).

It belongs to the universal ribosomal protein uL10 family. As to quaternary structure, part of the ribosomal stalk of the 50S ribosomal subunit. The N-terminus interacts with L11 and the large rRNA to form the base of the stalk. The C-terminus forms an elongated spine to which L12 dimers bind in a sequential fashion forming a multimeric L10(L12)X complex.

Forms part of the ribosomal stalk, playing a central role in the interaction of the ribosome with GTP-bound translation factors. This Bacillus cereus protein is Large ribosomal subunit protein uL10 (rplJ).